Consider the following 87-residue polypeptide: Beta-defensin 109C (87 aa).

The signal sequence occupies residues M1–G22. Disulfide bonds link C31-C59, C38-C53, and C43-C60.

Belongs to the beta-defensin family.

It is found in the secreted. Has antibacterial activity. This Homo sapiens (Human) protein is Beta-defensin 109C (DEFB109C).